The following is a 92-amino-acid chain: Acylphosphatase (92 aa).

The Acylphosphatase-like domain occupies 5–92; that stretch reads RVHIIVSGLV…TSCREFRILT (88 aa). Active-site residues include Arg20 and Asn38.

This sequence belongs to the acylphosphatase family.

The catalysed reaction is an acyl phosphate + H2O = a carboxylate + phosphate + H(+). This is Acylphosphatase (acyP) from Chlorobaculum tepidum (strain ATCC 49652 / DSM 12025 / NBRC 103806 / TLS) (Chlorobium tepidum).